Here is a 113-residue protein sequence, read N- to C-terminus: UPF0482 protein YnfB (113 aa).

An N-terminal signal peptide occupies residues 1–28; it reads MKITLSKRIGLLAFLLPCALALSTTVHA.

It belongs to the UPF0482 family.

The chain is UPF0482 protein YnfB from Escherichia coli O127:H6 (strain E2348/69 / EPEC).